Here is a 1159-residue protein sequence, read N- to C-terminus: RAD51-associated protein 2 (1159 aa).

The interval 1–35 is disordered; that stretch reads MSLPQPTPRMAELRKPTSSLTPPEDPDSQPPSSKR. The tract at residues 1111–1159 is interaction with RAD51; it reads SHFPHGISRVRPLKTCSRPIRIGLSRKARIKQLHPYLKQMCYGNLKENF.

In terms of assembly, interacts with RAD51. In terms of tissue distribution, specifically expressed in meiotic tissues. Highly expressed in testis.

The sequence is that of RAD51-associated protein 2 (RAD51AP2) from Homo sapiens (Human).